We begin with the raw amino-acid sequence, 471 residues long: Exoglucanase 2 (471 aa).

The first 18 residues, 1 to 18 (MIVGILTTLATLATLAAS), serve as a signal peptide directing secretion. Residues 19–24 (VPLEER) constitute a propeptide that is removed on maturation. Q25 carries the pyrrolidone carboxylic acid modification. Residues 26-62 (ACSSVWGQCGGQNWSGPTCCASGSTCVYSNDYYSQCL) enclose the CBM1 domain. The span at 64–101 (GAASSSSSTRAASTTSRVSPTTSRSSSATPPPGSTTTR) shows a compositional bias: low complexity. Residues 64–108 (GAASSSSSTRAASTTSRVSPTTSRSSSATPPPGSTTTRVPPVGSG) are disordered. The linker stretch occupies residues 66–106 (ASSSSSTRAASTTSRVSPTTSRSSSATPPPGSTTTRVPPVG). Residues 107–471 (SGTATYSGNP…LLTNANPSFL (365 aa)) form a catalytic region. Residues T111 and T121 are each glycosylated (O-linked (Man...) threonine). O-linked (Man...) serine glycans are attached at residues S130, S133, S134, and S139. The O-linked (Man...) threonine glycan is linked to T146. Residues C200 and C259 are joined by a disulfide bond. Catalysis depends on D245, which acts as the Proton donor. N-linked (GlcNAc) asparagine glycosylation occurs at N313. Residue N334 is glycosylated (N-linked (GlcNAc...) (high mannose) asparagine). C392 and C439 are oxidised to a cystine.

The protein belongs to the glycosyl hydrolase 6 (cellulase B) family. Asn-334 contains mainly a high-mannose-type glycan (Hex(7-9)GlcNAc(2)) in a 3:1 ration with a single GlcNAc. Asn-313 was primarily unglycosylated with a small fraction (18%) bearing a single GlcNAc at this site.

It localises to the secreted. The enzyme catalyses Hydrolysis of (1-&gt;4)-beta-D-glucosidic linkages in cellulose and cellotetraose, releasing cellobiose from the non-reducing ends of the chains.. Functionally, exocellobiohydrolases (CBH) that catalyzes the hydrolysis of 1,4-beta-D-glucosidic bonds in cellulose to release the disaccharide cellobiose. The degradation of cellulose involves an interplay between different cellulolytic enzymes. Hydrolysis starts with endoglucanases (EGs), which cut internal beta-1,4-glucosidic bonds in cellulose to reduce the polymerization degree of the substrate and create new chain ends for exocellobiohydrolases (CBHs). The CBHs release the disaccharide cellobiose from the non-reducing end of the cellulose polymer chain. Finally, beta-1,4-glucosidases hydrolyze the cellobiose and other short cello-oligosaccharides into glucose units. This is Exoglucanase 2 (cbh2) from Hypocrea jecorina (Trichoderma reesei).